The chain runs to 687 residues: DNA ligase (687 aa).

NAD(+)-binding positions include 34–38 (DAEYD), 83–84 (SL), and Glu117. The active-site N6-AMP-lysine intermediate is Lys119. NAD(+) is bound by residues Arg140, Glu182, Lys298, and Lys322. The Zn(2+) site is built by Cys416, Cys419, Cys434, and Cys439. One can recognise a BRCT domain in the interval 609-687 (EARGPFAGKT…EEEFVRLLKE (79 aa)).

This sequence belongs to the NAD-dependent DNA ligase family. LigA subfamily. Mg(2+) serves as cofactor. Requires Mn(2+) as cofactor.

The enzyme catalyses NAD(+) + (deoxyribonucleotide)n-3'-hydroxyl + 5'-phospho-(deoxyribonucleotide)m = (deoxyribonucleotide)n+m + AMP + beta-nicotinamide D-nucleotide.. Functionally, DNA ligase that catalyzes the formation of phosphodiester linkages between 5'-phosphoryl and 3'-hydroxyl groups in double-stranded DNA using NAD as a coenzyme and as the energy source for the reaction. It is essential for DNA replication and repair of damaged DNA. The protein is DNA ligase of Anaeromyxobacter sp. (strain K).